A 358-amino-acid polypeptide reads, in one-letter code: Gentisate 1,2-dioxygenase (358 aa).

The 67-residue stretch at 99–165 (QYLGPREVAP…VTDEPMAWLD (67 aa)) folds into the Cupin type-2 domain. Positions 185–215 (DELSTRETPERSRGERLWGHPGLRPIGRPDQ) are disordered. A compositionally biased stretch (basic and acidic residues) spans 187–202 (LSTRETPERSRGERLW).

Belongs to the gentisate 1,2-dioxygenase family.

The catalysed reaction is 2,5-dihydroxybenzoate + O2 = 3-maleylpyruvate + H(+). Involved in the degradation of salicylate via a pathway involving coenzyme A derivative. Catalyzes the oxygen-dependent ring fission of gentisate between the carboxyl and proximal hydroxyl groups at positions 1 and 2 of the aromatic ring to form maleylpyruvate. The substrate specificity is strong, since salicylate, catechol, protocatechuic acid, homogenetisate, 2,3-dihydroxybenzoate or 5-aminosalicylate cannot substitute for gentisate in the ring cleavage reaction. The polypeptide is Gentisate 1,2-dioxygenase (Streptomyces sp).